Consider the following 377-residue polypeptide: MDPGPGLAALQAWAAKSPAYGAANQTVVDKVPPDMMHMIDPHWYQFPPMNPLWHALLGFTIGVLGFVSISGNGMVIYIFMSTKSLKTPSNLLVVNLAFSDFLMMCAMSPAMVVNCYYETWVWGPFACELYACAGSLFGCASIWTMTMIAFDRYNVIVKGIAAKPMTSNGALLRILGIWVFSLAWTLLPFFGWNRYVPEGNMTACGTDYLSKSWVSRSYILIYSVFVYFLPLLLIIYSYFFIVQAVAAHEKAMREQAKKMNVASLRSSEAANTSAECKLAKVALMTISLWFMAWTPYLVINYTGVFESAPISPLATIWGSLFAKANAVYNPIVYGISHPKYQAALYAKFPSLQCQSAPEDAGSVASGTTAVSEEKPAA.

At 1–58 the chain is on the extracellular side; it reads MDPGPGLAALQAWAAKSPAYGAANQTVVDKVPPDMMHMIDPHWYQFPPMNPLWHALLG. Asn-24 is a glycosylation site (N-linked (GlcNAc...) asparagine). Residues 59-79 form a helical membrane-spanning segment; the sequence is FTIGVLGFVSISGNGMVIYIF. The Cytoplasmic segment spans residues 80–92; sequence MSTKSLKTPSNLL. Residues 93–113 form a helical membrane-spanning segment; that stretch reads VVNLAFSDFLMMCAMSPAMVV. Topologically, residues 114–129 are extracellular; the sequence is NCYYETWVWGPFACEL. Cys-127 and Cys-204 are joined by a disulfide. The helical transmembrane segment at 130 to 150 threads the bilayer; it reads YACAGSLFGCASIWTMTMIAF. The Cytoplasmic segment spans residues 151 to 169; it reads DRYNVIVKGIAAKPMTSNG. Residues 170-190 traverse the membrane as a helical segment; sequence ALLRILGIWVFSLAWTLLPFF. Over 191–220 the chain is Extracellular; it reads GWNRYVPEGNMTACGTDYLSKSWVSRSYIL. An N-linked (GlcNAc...) asparagine glycan is attached at Asn-200. Residues 221-241 form a helical membrane-spanning segment; it reads IYSVFVYFLPLLLIIYSYFFI. Topologically, residues 242–280 are cytoplasmic; the sequence is VQAVAAHEKAMREQAKKMNVASLRSSEAANTSAECKLAK. A helical membrane pass occupies residues 281–301; that stretch reads VALMTISLWFMAWTPYLVINY. At 302 to 312 the chain is on the extracellular side; that stretch reads TGVFESAPISP. A helical membrane pass occupies residues 313–335; sequence LATIWGSLFAKANAVYNPIVYGI. Residues 336 to 377 are Cytoplasmic-facing; sequence SHPKYQAALYAKFPSLQCQSAPEDAGSVASGTTAVSEEKPAA. The disordered stretch occupies residues 357–377; the sequence is PEDAGSVASGTTAVSEEKPAA.

The protein belongs to the G-protein coupled receptor 1 family. Opsin subfamily. As to expression, in the retina, expression is abundant and uniform in the anterior-posterior and oblique cells of the retinulae, with some expression in the proximal cells. There is no expression in the dorsal rim retinulae (at protein level).

The protein localises to the cell projection. It is found in the rhabdomere membrane. Functionally, visual pigments are the light-absorbing molecules that mediate vision. They consist of an apoprotein, opsin, covalently linked to cis-retinal. May play a role in photoperiodic photoreception. The protein is Opsin-1 (OP1) of Manduca sexta (Tobacco hawkmoth).